Consider the following 433-residue polypeptide: Probable M18 family aminopeptidase 2 (433 aa).

Zn(2+)-binding residues include histidine 84, histidine 161, and histidine 409.

This sequence belongs to the peptidase M18 family. Zn(2+) serves as cofactor.

This chain is Probable M18 family aminopeptidase 2 (apeB), found in Clostridium acetobutylicum (strain ATCC 824 / DSM 792 / JCM 1419 / IAM 19013 / LMG 5710 / NBRC 13948 / NRRL B-527 / VKM B-1787 / 2291 / W).